The primary structure comprises 108 residues: Class I hydrophobin 3 (108 aa).

A signal peptide spans 1–17; that stretch reads MFFQTTIVAALASLAVA. Intrachain disulfides connect cysteine 28/cysteine 87, cysteine 35/cysteine 81, cysteine 36/cysteine 69, and cysteine 88/cysteine 101. N-linked (GlcNAc...) asparagine glycosylation is present at asparagine 37.

The protein belongs to the fungal hydrophobin family. In terms of assembly, self-assembles to form functional amyloid fibrils called rodlets. Self-assembly into fibrillar rodlets occurs spontaneously at hydrophobic:hydrophilic interfaces and the rodlets further associate laterally to form amphipathic monolayers.

It is found in the secreted. The protein localises to the cell wall. In terms of biological role, aerial growth, conidiation, and dispersal of filamentous fungi in the environment rely upon a capability of their secreting small amphipathic proteins called hydrophobins (HPBs) with low sequence identity. Class I can self-assemble into an outermost layer of rodlet bundles on aerial cell surfaces, conferring cellular hydrophobicity that supports fungal growth, development and dispersal; whereas Class II form highly ordered films at water-air interfaces through intermolecular interactions but contribute nothing to the rodlet structure. Vmh3 is a class I hydrophobin that is essential for the maintenance of the surface hydrophobicity of the mycelium and might be involved in the development of fruiting bodies. Plays an important role in hyphal resistance against environmental stress. Necessary for the efficient biodegradation of lignin. This chain is Class I hydrophobin 3, found in Pleurotus ostreatus (strain PC15) (Oyster mushroom).